The chain runs to 422 residues: Probable sucrose-phosphatase 2 (422 aa).

This sequence belongs to the sucrose phosphatase family. Homodimer. The cofactor is Mg(2+).

The enzyme catalyses sucrose 6(F)-phosphate + H2O = sucrose + phosphate. It participates in glycan biosynthesis; sucrose biosynthesis; sucrose from D-fructose 6-phosphate and UDP-alpha-D-glucose: step 2/2. In terms of biological role, catalyzes the final step of sucrose synthesis. The polypeptide is Probable sucrose-phosphatase 2 (SPP2) (Arabidopsis thaliana (Mouse-ear cress)).